We begin with the raw amino-acid sequence, 25 residues long: Antimicrobial peptide THP3 (25 aa).

It is found in the secreted. Its function is as follows. Bactericidal activity; inhibits Staphylococcus aureus. In Meleagris gallopavo (Wild turkey), this protein is Antimicrobial peptide THP3.